Reading from the N-terminus, the 322-residue chain is Quinolinate synthase (322 aa).

Iminosuccinate-binding residues include H38 and S55. C100 contacts [4Fe-4S] cluster. Iminosuccinate is bound by residues 126–128 (YIN) and S143. Residue C186 coordinates [4Fe-4S] cluster. Residues 212 to 214 (HPE) and T229 each bind iminosuccinate. Residue C279 coordinates [4Fe-4S] cluster.

Belongs to the quinolinate synthase family. Type 2 subfamily. Requires [4Fe-4S] cluster as cofactor.

The protein resides in the cytoplasm. It catalyses the reaction iminosuccinate + dihydroxyacetone phosphate = quinolinate + phosphate + 2 H2O + H(+). It functions in the pathway cofactor biosynthesis; NAD(+) biosynthesis; quinolinate from iminoaspartate: step 1/1. Its function is as follows. Catalyzes the condensation of iminoaspartate with dihydroxyacetone phosphate to form quinolinate. This Aquifex aeolicus (strain VF5) protein is Quinolinate synthase.